The primary structure comprises 100 residues: MRLTPHEQDRLLISYAADLARRRRARGLRLNHPEAVAVITDHLLEGARDGRTVAELMVSGRDVLGRDDVMEGVPEMLHDVQVEATFPDGTKLVTVHHPIP.

It belongs to the urease gamma subunit family. As to quaternary structure, heterotrimer of UreA (gamma), UreB (beta) and UreC (alpha) subunits. Three heterotrimers associate to form the active enzyme.

The protein resides in the cytoplasm. The catalysed reaction is urea + 2 H2O + H(+) = hydrogencarbonate + 2 NH4(+). It functions in the pathway nitrogen metabolism; urea degradation; CO(2) and NH(3) from urea (urease route): step 1/1. The protein is Urease subunit gamma of Mycobacterium sp. (strain JLS).